The following is a 360-amino-acid chain: Glutamate 5-kinase (360 aa).

Residue Lys-7 coordinates ATP. The substrate site is built by Ser-47, Asp-134, and Asn-146. ATP-binding positions include 166–167 (TD) and 210–216 (TGGITTK). The region spanning 275 to 348 (VGQITLDEGA…LNKKENINSS (74 aa)) is the PUA domain.

This sequence belongs to the glutamate 5-kinase family.

Its subcellular location is the cytoplasm. The catalysed reaction is L-glutamate + ATP = L-glutamyl 5-phosphate + ADP. It participates in amino-acid biosynthesis; L-proline biosynthesis; L-glutamate 5-semialdehyde from L-glutamate: step 1/2. Its function is as follows. Catalyzes the transfer of a phosphate group to glutamate to form L-glutamate 5-phosphate. The protein is Glutamate 5-kinase of Prochlorococcus marinus subsp. pastoris (strain CCMP1986 / NIES-2087 / MED4).